Consider the following 122-residue polypeptide: Large ribosomal subunit protein uL14 (122 aa).

The protein belongs to the universal ribosomal protein uL14 family. Part of the 50S ribosomal subunit. Forms a cluster with proteins L3 and L19. In the 70S ribosome, L14 and L19 interact and together make contacts with the 16S rRNA in bridges B5 and B8.

Functionally, binds to 23S rRNA. Forms part of two intersubunit bridges in the 70S ribosome. This Macrococcus caseolyticus (strain JCSC5402) (Macrococcoides caseolyticum) protein is Large ribosomal subunit protein uL14.